The following is a 341-amino-acid chain: Phenylalanine--tRNA ligase alpha subunit (341 aa).

Glu-256 serves as a coordination point for Mg(2+).

This sequence belongs to the class-II aminoacyl-tRNA synthetase family. Phe-tRNA synthetase alpha subunit type 1 subfamily. Tetramer of two alpha and two beta subunits. It depends on Mg(2+) as a cofactor.

The protein localises to the cytoplasm. It carries out the reaction tRNA(Phe) + L-phenylalanine + ATP = L-phenylalanyl-tRNA(Phe) + AMP + diphosphate + H(+). This chain is Phenylalanine--tRNA ligase alpha subunit, found in Chlamydia felis (strain Fe/C-56) (Chlamydophila felis).